The chain runs to 251 residues: Phosphate import ATP-binding protein PstB (251 aa).

One can recognise an ABC transporter domain in the interval Ile-5–Ile-246. Residue Gly-37 to Ser-44 participates in ATP binding.

This sequence belongs to the ABC transporter superfamily. Phosphate importer (TC 3.A.1.7) family. In terms of assembly, the complex is composed of two ATP-binding proteins (PstB), two transmembrane proteins (PstC and PstA) and a solute-binding protein (PstS).

It localises to the cell membrane. The catalysed reaction is phosphate(out) + ATP + H2O = ADP + 2 phosphate(in) + H(+). Its function is as follows. Part of the ABC transporter complex PstSACB involved in phosphate import. Responsible for energy coupling to the transport system. In Dehalococcoides mccartyi (strain ATCC BAA-2266 / KCTC 15142 / 195) (Dehalococcoides ethenogenes (strain 195)), this protein is Phosphate import ATP-binding protein PstB.